An 838-amino-acid chain; its full sequence is Protein P (838 aa).

A terminal protein domain (TP) region spans residues 1–179; that stretch reads MPLSYQHFRK…FCGSPYSWEQ (179 aa). The interval 180–341 is spacer; sequence ELQHSQRHGD…YCLSHLVNLR (162 aa). A disordered region spans residues 219–245; sequence GLQPHQGPLASSQPGRSGSIRARAHPS. The polymerase/reverse transcriptase domain (RT) stretch occupies residues 342 to 685; the sequence is EDWGPCDDHG…YMNLYPVARQ (344 aa). In terms of domain architecture, Reverse transcriptase spans 352-595; sequence EHHIRIPRTP…YSLNFMGYII (244 aa). 3 residues coordinate Mg(2+): aspartate 424, aspartate 546, and aspartate 547.

The protein belongs to the hepadnaviridae P protein family.

It catalyses the reaction DNA(n) + a 2'-deoxyribonucleoside 5'-triphosphate = DNA(n+1) + diphosphate. It carries out the reaction Endonucleolytic cleavage to 5'-phosphomonoester.. Its activity is regulated as follows. Activated by host HSP70 and HSP40 in vitro to be able to bind the epsilon loop of the pgRNA. Because deletion of the RNase H region renders the protein partly chaperone-independent, the chaperones may be needed indirectly to relieve occlusion of the RNA-binding site by this domain. Inhibited by several reverse-transcriptase inhibitors: Lamivudine, Adefovir and Entecavir. In terms of biological role, multifunctional enzyme that converts the viral RNA genome into dsDNA in viral cytoplasmic capsids. This enzyme displays a DNA polymerase activity that can copy either DNA or RNA templates, and a ribonuclease H (RNase H) activity that cleaves the RNA strand of RNA-DNA heteroduplexes in a partially processive 3'- to 5'-endonucleasic mode. Neo-synthesized pregenomic RNA (pgRNA) are encapsidated together with the P protein, and reverse-transcribed inside the nucleocapsid. Initiation of reverse-transcription occurs first by binding the epsilon loop on the pgRNA genome, and is initiated by protein priming, thereby the 5'-end of (-)DNA is covalently linked to P protein. Partial (+)DNA is synthesized from the (-)DNA template and generates the relaxed circular DNA (RC-DNA) genome. After budding and infection, the RC-DNA migrates in the nucleus, and is converted into a plasmid-like covalently closed circular DNA (cccDNA). The activity of P protein does not seem to be necessary for cccDNA generation, and is presumably released from (+)DNA by host nuclear DNA repair machinery. This Hepatitis B virus genotype A2 subtype adw (isolate Japan/Nishioka/1983) (HBV-A) protein is Protein P.